Here is a 369-residue protein sequence, read N- to C-terminus: MDATKWTQGFQEMMNVKPMEQIMIPNNNTHQPNTTSNARPNTILTSNGVSTAGATVSGVSNNNNNTAVVAERKARPQEKLNCPRCNSTNTKFCYYNNYSLTQPRYFCKGCRRYWTEGGSLRNVPVGGSSRKNKRSSSSSSSNILQTIPSSLPDLNPPILFSNQIHNKSKGSSQDLNLLSFPVMQDQHHHHVHMSQFLQMPKMEGNGNITHQQQPSSSSSVYGSSSSPVSALELLRTGVNVSSRSGINSSFMPSGSMMDSNTVLYTSSGFPTMVDYKPSNLSFSTDHQGLGHNSNNRSEALHSDHHQQGRVLFPFGDQMKELSSSITQEVDHDDNQQQKSHGNNNNNNNSSPNNGYWSGMFSTTGGGSSW.

Residues 80–134 (LNCPRCNSTNTKFCYYNNYSLTQPRYFCKGCRRYWTEGGSLRNVPVGGSSRKNKR) form a Dof-type zinc finger. Positions 82, 85, 107, and 110 each coordinate Zn(2+). Disordered regions lie at residues 120–149 (LRNV…TIPS), 203–224 (EGNG…YGSS), 284–304 (TDHQ…HSDH), and 322–369 (SSSI…GSSW). Over residues 214–224 (PSSSSSVYGSS) the composition is skewed to low complexity. Positions 284–297 (TDHQGLGHNSNNRS) are enriched in polar residues. Positions 342–362 (NNNNNNNSSPNNGYWSGMFST) are enriched in low complexity.

In terms of tissue distribution, expressed in the vascular system of the mother plant, but not present in the seed and embryo. In maturing siliques, found all through the funiculus connecting the placenta to the ovule, but not in the ovule.

It localises to the nucleus. Transcription factor specifically involved in the maternal control of seed germination. Regulates transcription by binding to a 5'-AA[AG]G-3' consensus core sequence. May ensure the activation of a component that would trigger germination as a consequence of red light perception. This chain is Dof zinc finger protein DOF2.5 (DOF2.5), found in Arabidopsis thaliana (Mouse-ear cress).